The following is a 250-amino-acid chain: DNA repair protein RecO (250 aa).

It belongs to the RecO family.

Involved in DNA repair and RecF pathway recombination. The polypeptide is DNA repair protein RecO (Thermodesulfovibrio yellowstonii (strain ATCC 51303 / DSM 11347 / YP87)).